A 199-amino-acid polypeptide reads, in one-letter code: MAEAPGDIERLIELMARLPGLGPRSARRAVLLMLKKRGAVMAPLAQAMAEVATSARDCVRCGNITNADLCGICRDERRATGELCVVEDVADLWALERAGAFRGRYHVLGGVLSALDSVGPEELRIPRLAERVREEGISEVILALNATVDGQTTAHYIADVLEPSGVQVTSLAQGVPIGGELDYLDDGTIGAALRARRRF.

The C4-type zinc finger occupies 58–73; it reads CVRCGNITNADLCGIC. The Toprim domain occupies 81–176; it reads GELCVVEDVA…QVTSLAQGVP (96 aa).

Belongs to the RecR family.

Its function is as follows. May play a role in DNA repair. It seems to be involved in an RecBC-independent recombinational process of DNA repair. It may act with RecF and RecO. The chain is Recombination protein RecR from Cereibacter sphaeroides (strain ATCC 17029 / ATH 2.4.9) (Rhodobacter sphaeroides).